A 65-amino-acid chain; its full sequence is Large ribosomal subunit protein bL35 (65 aa).

Belongs to the bacterial ribosomal protein bL35 family.

This Agathobacter rectalis (strain ATCC 33656 / DSM 3377 / JCM 17463 / KCTC 5835 / VPI 0990) (Eubacterium rectale) protein is Large ribosomal subunit protein bL35.